We begin with the raw amino-acid sequence, 100 residues long: RxLR effector protein Avrblb2 (100 aa).

The signal sequence occupies residues 1 to 22 (MRSFLYGVLAFAVLARSSAVAA). A RxLR-dEER motif is present at residues 43-57 (RSLRIEAQEVIQSGR). The short motif at 78–82 (RPDIK) is the Calmodulin-binding motif element.

It belongs to the RxLR effector family. Interacts with the host papain-like cysteine protease C14. Interacts with the host calmodulin.

It is found in the secreted. The protein localises to the host cell membrane. Secreted effector that acts as an elicitor of hypersensitive response (HR) specifically on plants carrying defense protein Rpi-blb2. Enhances P.infestans colonization of Nicotiana benthamiana leaves. Interacts with, and subsequently prevents secretion into the apoplast of the host papain-like cysteine protease C14, thus promoting virulence by interfering with the execution of host defenses. Associates with calmodulin at the host plasma membrane to interfere with plant defense-associated calcium signaling in hosts. The polypeptide is RxLR effector protein Avrblb2 (Phytophthora infestans (strain T30-4) (Potato late blight agent)).